Reading from the N-terminus, the 101-residue chain is Large ribosomal subunit protein uL24 (101 aa).

This sequence belongs to the universal ribosomal protein uL24 family. In terms of assembly, part of the 50S ribosomal subunit.

One of two assembly initiator proteins, it binds directly to the 5'-end of the 23S rRNA, where it nucleates assembly of the 50S subunit. Functionally, one of the proteins that surrounds the polypeptide exit tunnel on the outside of the subunit. The sequence is that of Large ribosomal subunit protein uL24 from Ruegeria sp. (strain TM1040) (Silicibacter sp.).